The primary structure comprises 133 residues: Putative pre-16S rRNA nuclease (133 aa).

The protein belongs to the YqgF nuclease family.

Its subcellular location is the cytoplasm. Functionally, could be a nuclease involved in processing of the 5'-end of pre-16S rRNA. The polypeptide is Putative pre-16S rRNA nuclease (Bordetella bronchiseptica (strain ATCC BAA-588 / NCTC 13252 / RB50) (Alcaligenes bronchisepticus)).